Consider the following 319-residue polypeptide: uncharacterized protein (319 aa).

Positions 21–70 (ETETLKNSTDEVQTSSSFSSSGGRQSSPLTSGSKLEREKQTPSLEQGDTQ) are disordered. Residues 25 to 34 (LKNSTDEVQT) are compositionally biased toward polar residues. A compositionally biased stretch (low complexity) spans 35–51 (SSSFSSSGGRQSSPLTS). A compositionally biased stretch (polar residues) spans 61–70 (TPSLEQGDTQ).

This is an uncharacterized protein from Homo sapiens (Human).